Reading from the N-terminus, the 192-residue chain is Genome polyprotein (192 aa).

Residues 1–52 (RNLGKVIDTLTCGFADLMGYIPLVGAPLGGAARALAHGVRVLEDGVNYATGN) lie on the Cytoplasmic side of the membrane. Residues 6-57 (VIDTLTCGFADLMGYIPLVGAPLGGAARALAHGVRVLEDGVNYATGNLPGCS) form an interaction with APOA2 region. The segment at 48-51 (YATG) is important for lipid droplets localization. The chain crosses the membrane as a helical span at residues 53–73 (LPGCSFSIFLLALLSCLTVPA). Positions 62-75 (LLALLSCLTVPASA) are cleaved as a propeptide — ER anchor for the core protein, removed in mature form by host signal peptidase. At 74–192 (SAYQVRNSSG…WTTQGCNCSI (119 aa)) the chain is on the lumenal side. N-linked (GlcNAc...) asparagine; by host glycosylation is found at Asn-80, Asn-93, and Asn-118. Positions 149–180 (LVGSATLCSALYVGDLCGSVFLVGQLFTFSPR) are important for fusion. The N-linked (GlcNAc...) asparagine; by host glycan is linked to Asn-189.

This sequence belongs to the hepacivirus polyprotein family. In terms of assembly, homooligomer. Interacts with E1 (via C-terminus). Interacts with the non-structural protein 5A. Interacts (via N-terminus) with host STAT1 (via SH2 domain); this interaction results in decreased STAT1 phosphorylation and ubiquitin-mediated proteasome-dependent STAT1 degradation, leading to decreased IFN-stimulated gene transcription. Interacts with host STAT3; this interaction constitutively activates STAT3. Interacts with host LTBR receptor. Interacts with host TNFRSF1A receptor and possibly induces apoptosis. Interacts with host HNRPK. Interacts with host YWHAE. Interacts with host UBE3A/E6AP. Interacts with host DDX3X. Interacts with host APOA2. Interacts with host RXRA protein. Interacts with host SP110 isoform 3/Sp110b; this interaction sequesters the transcriptional corepressor SP110 away from the nucleus. Interacts with host CREB3 nuclear transcription protein; this interaction triggers cell transformation. Interacts with host ACY3. Interacts with host C1QR1. Interacts with host RBM24; this interaction, which enhances the interaction of the mature core protein with 5'-UTR, may inhibit viral translation and favor replication. Interacts with host EIF2AK2/PKR; this interaction induces the autophosphorylation of EIF2AK2. Part of the viral assembly initiation complex composed of NS2, E1, E2, NS3, NS4A, NS5A and the mature core protein. Forms a heterodimer with envelope glycoprotein E2. Interacts with mature core protein. Interacts with protease NS2. The heterodimer E1/E2 interacts with host CLDN1; this interaction plays a role in viral entry into host cell. Interacts with host SPSB2 (via C-terminus). Part of the viral assembly initiation complex composed of NS2, E1, E2, NS3, NS4A, NS5A and the mature core protein. Specific enzymatic cleavages in vivo yield mature proteins. The structural proteins, core, E1, E2 and p7 are produced by proteolytic processing by host signal peptidases. The core protein precursor is synthesized as a 23 kDa, which is retained in the ER membrane through the hydrophobic signal peptide. Cleavage by the signal peptidase releases the 21 kDa mature core protein. The cleavage of the core protein precursor occurs between aminoacids 176 and 188 but the exact cleavage site is not known. Some degraded forms of the core protein appear as well during the course of infection. The other proteins (p7, NS2, NS3, NS4A, NS4B, NS5A and NS5B) are cleaved by the viral proteases. Autoprocessing between NS2 and NS3 is mediated by the NS2 cysteine protease catalytic domain and regulated by the NS3 N-terminal domain. In terms of processing, phosphorylated by host PKC and PKA. Post-translationally, ubiquitinated; mediated by UBE3A and leading to core protein subsequent proteasomal degradation. Highly N-glycosylated.

The protein localises to the host endoplasmic reticulum membrane. It is found in the host mitochondrion membrane. The protein resides in the virion. It localises to the host cytoplasm. Its subcellular location is the host nucleus. The protein localises to the host lipid droplet. It is found in the virion membrane. Packages viral RNA to form a viral nucleocapsid, and promotes virion budding. Participates in the viral particle production as a result of its interaction with the non-structural protein 5A. Binds RNA and may function as a RNA chaperone to induce the RNA structural rearrangements taking place during virus replication. Modulates viral translation initiation by interacting with viral IRES and 40S ribosomal subunit. Affects various cell signaling pathways, host immunity and lipid metabolism. Prevents the establishment of cellular antiviral state by blocking the interferon-alpha/beta (IFN-alpha/beta) and IFN-gamma signaling pathways and by blocking the formation of phosphorylated STAT1 and promoting ubiquitin-mediated proteasome-dependent degradation of STAT1. Activates STAT3 leading to cellular transformation. Regulates the activity of cellular genes, including c-myc and c-fos. May repress the promoter of p53, and sequester CREB3 and SP110 isoform 3/Sp110b in the cytoplasm. Represses cell cycle negative regulating factor CDKN1A, thereby interrupting an important check point of normal cell cycle regulation. Targets transcription factors involved in the regulation of inflammatory responses and in the immune response: suppresses TNF-induced NF-kappa-B activation, and activates AP-1. Binds to dendritic cells (DCs) via C1QR1, resulting in down-regulation of T-lymphocytes proliferation. Alters lipid metabolism by interacting with hepatocellular proteins involved in lipid accumulation and storage. Induces up-regulation of FAS promoter activity, and thereby contributes to the increased triglyceride accumulation in hepatocytes (steatosis). Functionally, forms a heterodimer with envelope glycoprotein E2, which mediates virus attachment to the host cell, virion internalization through clathrin-dependent endocytosis and fusion with host membrane. Fusion with the host cell is most likely mediated by both E1 and E2, through conformational rearrangements of the heterodimer required for fusion rather than a classical class II fusion mechanism. E1/E2 heterodimer binds host apolipoproteins such as APOB and ApoE thereby forming a lipo-viro-particle (LVP). APOE associated to the LVP allows the initial virus attachment to cell surface receptors such as the heparan sulfate proteoglycans (HSPGs), syndecan-1 (SDC1), syndecan-1 (SDC2), the low-density lipoprotein receptor (LDLR) and scavenger receptor class B type I (SCARB1). The cholesterol transfer activity of SCARB1 allows E2 exposure and binding of E2 to SCARB1 and the tetraspanin CD81. E1/E2 heterodimer binding on CD81 activates the epithelial growth factor receptor (EGFR) signaling pathway. Diffusion of the complex E1-E2-EGFR-SCARB1-CD81 to the cell lateral membrane allows further interaction with Claudin 1 (CLDN1) and occludin (OCLN) to finally trigger HCV entry. The polypeptide is Genome polyprotein (Hepatitis C virus (isolate EC1) (HCV)).